We begin with the raw amino-acid sequence, 63 residues long: Large ribosomal subunit protein bL28 (63 aa).

Belongs to the bacterial ribosomal protein bL28 family.

The sequence is that of Large ribosomal subunit protein bL28 from Geotalea uraniireducens (strain Rf4) (Geobacter uraniireducens).